The primary structure comprises 335 residues: Glyceraldehyde-3-phosphate dehydrogenase (335 aa).

Residues 15-16 (RI) and Asp37 each bind NAD(+). D-glyceraldehyde 3-phosphate contacts are provided by residues 155 to 157 (SCT), Thr186, Arg201, 214 to 215 (TG), and Arg237. The Nucleophile role is filled by Cys156. NAD(+) contacts are provided by Gln301 and Asn318.

The protein belongs to the glyceraldehyde-3-phosphate dehydrogenase family. In terms of assembly, homotetramer.

Its subcellular location is the cytoplasm. It catalyses the reaction D-glyceraldehyde 3-phosphate + phosphate + NADP(+) = (2R)-3-phospho-glyceroyl phosphate + NADPH + H(+). The enzyme catalyses D-glyceraldehyde 3-phosphate + phosphate + NAD(+) = (2R)-3-phospho-glyceroyl phosphate + NADH + H(+). It participates in carbohydrate degradation; glycolysis; pyruvate from D-glyceraldehyde 3-phosphate: step 1/5. The sequence is that of Glyceraldehyde-3-phosphate dehydrogenase (gap) from Haloarcula vallismortis (Halobacterium vallismortis).